An 848-amino-acid polypeptide reads, in one-letter code: Aryl hydrocarbon receptor (848 aa).

A propeptide spanning residues 1-9 (MSSGANITY) is cleaved from the precursor. Residues 1-38 (MSSGANITYASRKRRKPVQKTVKPIPAEGIKSNPSKRH) form a disordered region. 2 short sequence motifs (nuclear localization signal) span residues 12–15 (RKRR) and 36–41 (KRHRDR). A bHLH domain is found at 26 to 79 (PAEGIKSNPSKRHRDRLNTELDRLASLLPFPQDVINKLDKLSVLRLSVSYLRAK). Residues 37–65 (RHRDRLNTELDRLASLLPFPQDVINKLDK) are DNA-binding. 3 required for maintaining the overall integrity of the AHR:ARNT heterodimer and its transcriptional activity regions span residues 49 to 81 (LASLLPFPQDVINKLDKLSVLRLSVSYLRAKSF), 116 to 124 (LLQALNGFV), and 260 to 262 (FAI). The Nuclear export signal signature appears at 63–71 (LDKLSVLRL). A PAS 1 domain is found at 111-175 (QEGEFLLQAL…AEFQRQLHWA (65 aa)). Residues 266–336 (LQPPSILEIR…CAESHIRMIK (71 aa)) enclose the PAS 2 domain. The region spanning 342 to 383 (MTVFRLLAKHSRWRWVQSNARLIYRNGRPDYIIVTQRPLTDE) is the PAC domain. Positions 421–449 (LPIRTKSNTSRKDWAPQSTPSKDSFHPSS) are disordered. Residues 436-449 (PQSTPSKDSFHPSS) are compositionally biased toward polar residues.

Homodimer. Heterodimer; efficient DNA binding requires dimerization with another bHLH protein. Interacts with ARNT; the heterodimer ARNT:AHR binds to core DNA sequence 5'-TGCGTG-3' within the dioxin response element (DRE) of target gene promoters and activates their transcription. Binds MYBBP1A. Interacts with coactivators including SRC-1, RIP140 and NOCA7, and with the corepressor SMRT. Interacts with NEDD8 and IVNS1ABP. Interacts with BMAL1. Interacts with HSP90AB1. Interacts with TIPARP; leading to mono-ADP-ribosylation of AHR and subsequent inhibition of AHR. In terms of processing, mono-ADP-ribosylated, leading to inhibit transcription activator activity of AHR.

Its subcellular location is the cytoplasm. The protein localises to the nucleus. Ligand-activated transcription factor that enables cells to adapt to changing conditions by sensing compounds from the environment, diet, microbiome and cellular metabolism, and which plays important roles in development, immunity and cancer. Upon ligand binding, translocates into the nucleus, where it heterodimerizes with ARNT and induces transcription by binding to xenobiotic response elements (XRE). Regulates a variety of biological processes, including angiogenesis, hematopoiesis, drug and lipid metabolism, cell motility and immune modulation. Xenobiotics can act as ligands: upon xenobiotic-binding, activates the expression of multiple phase I and II xenobiotic chemical metabolizing enzyme genes (such as the CYP1A1 gene). Mediates biochemical and toxic effects of halogenated aromatic hydrocarbons. Next to xenobiotics, natural ligands derived from plants, microbiota, and endogenous metabolism are potent AHR agonists. Tryptophan (Trp) derivatives constitute an important class of endogenous AHR ligands. Acts as a negative regulator of anti-tumor immunity: indoles and kynurenic acid generated by Trp catabolism act as ligand and activate AHR, thereby promoting AHR-driven cancer cell motility and suppressing adaptive immunity. Regulates the circadian clock by inhibiting the basal and circadian expression of the core circadian component PER1. Inhibits PER1 by repressing the CLOCK-BMAL1 heterodimer mediated transcriptional activation of PER1. The heterodimer ARNT:AHR binds to core DNA sequence 5'-TGCGTG-3' within the dioxin response element (DRE) of target gene promoters and activates their transcription. In Mus musculus castaneus (Southeastern Asian house mouse), this protein is Aryl hydrocarbon receptor (Ahr).